The primary structure comprises 238 residues: Cysteine-rich venom protein (238 aa).

The N-terminal stretch at 1 to 19 (MIAFIVLLSLAAVLQQSSG) is a signal peptide. Residues 38–164 (VDKHNALRRS…STKYLYVCQY (127 aa)) form the SCP domain. 8 disulfide bridges follow: C75/C153, C92/C165, C148/C162, C184/C191, C187/C196, C200/C233, C209/C227, and C218/C231. Residues 200-233 (CKYEDAFTNCNELAKETKCKTEWIKSKCPATCFC) enclose the ShKT domain.

It belongs to the CRISP family. As to expression, expressed by the venom gland.

It is found in the secreted. Blocks olfactory (CNGA2) and retinal (CNGA1) CNG channel currents. Does not affect neither depolarization- nor caffeine-induced contraction of smooth muscle. The polypeptide is Cysteine-rich venom protein (Drysdalia coronoides (White-lipped snake)).